We begin with the raw amino-acid sequence, 681 residues long: DNA ligase (681 aa).

Residues 45-49 (DFDFD), 94-95 (SL), and glutamate 120 contribute to the NAD(+) site. Catalysis depends on lysine 122, which acts as the N6-AMP-lysine intermediate. NAD(+) contacts are provided by arginine 143, glutamate 177, lysine 289, and lysine 313. Cysteine 403, cysteine 406, cysteine 421, and cysteine 426 together coordinate Zn(2+). A BRCT domain is found at 593–681 (SDQQPFAGQS…SLKINFKNTI (89 aa)).

The protein belongs to the NAD-dependent DNA ligase family. LigA subfamily. Requires Mg(2+) as cofactor. The cofactor is Mn(2+).

The catalysed reaction is NAD(+) + (deoxyribonucleotide)n-3'-hydroxyl + 5'-phospho-(deoxyribonucleotide)m = (deoxyribonucleotide)n+m + AMP + beta-nicotinamide D-nucleotide.. In terms of biological role, DNA ligase that catalyzes the formation of phosphodiester linkages between 5'-phosphoryl and 3'-hydroxyl groups in double-stranded DNA using NAD as a coenzyme and as the energy source for the reaction. It is essential for DNA replication and repair of damaged DNA. The protein is DNA ligase of Leptospira borgpetersenii serovar Hardjo-bovis (strain JB197).